Consider the following 1044-residue polypeptide: DEMETER-like protein 3 (1044 aa).

Residues 1 to 15 (MLTDGSQHTYQNGET) show a composition bias toward polar residues. The interval 1–107 (MLTDGSQHTY…KPRNPATTRL (107 aa)) is disordered. The segment covering 16-30 (KNSKEHERKCDESAH) has biased composition (basic and acidic residues). Positions 38 to 53 (THKKKEKKNSKEKHGI) are enriched in basic residues. Residues 54 to 66 (KHSESEHLQDDIS) show a composition bias toward basic and acidic residues. Residues 71-89 (GKGRRRNSKGTPKKLRFNR) show a composition bias toward basic residues. The tract at residues 348–445 (KVNLDPETIK…AFMSVAAKFP (98 aa)) is DEMETER. Residues Cys678, Cys685, Cys688, and Cys694 each coordinate [4Fe-4S] cluster. Positions 1024–1044 (VRRLHTPPDERGPKFMSDDDI) are disordered.

Belongs to the DNA glycosylase family. DEMETER subfamily. It depends on [4Fe-4S] cluster as a cofactor.

Its subcellular location is the nucleus. Potential transcriptional activator that may act by nicking the target promoter. Catalyzes the release of 5-methylcytosine (5-meC) from DNA by a glycosylase/lyase mechanism. The chain is DEMETER-like protein 3 (DML3) from Arabidopsis thaliana (Mouse-ear cress).